A 534-amino-acid chain; its full sequence is Protein tweety homolog 2 (534 aa).

The Extracellular portion of the chain corresponds to 1–44 (MQAARVDYIAPWWVVWLHSVPHVGLRLQPVNSTFSPGDESYQES). Asn-31 is a glycosylation site (N-linked (GlcNAc...) asparagine). Residues 45–65 (LLFLGLVAAVCLGLNLIFLVA) form a helical membrane-spanning segment. At 66–87 (YLVCACHCRRDDAVQTKQHHSC) the chain is on the cytoplasmic side. The chain crosses the membrane as a helical span at residues 88-108 (CITWTAVVAGLICCAAVGVGF). The Extracellular segment spans residues 109–213 (YGNSETNDGA…QTGYVEYYRW (105 aa)). Ca(2+) is bound by residues Glu-113 and Asp-116. Asn-129 is a glycosylation site (N-linked (GlcNAc) asparagine). The RGD motif lies at 164–166 (RGD). Thr-199 carries the phosphothreonine modification. Residues 214–234 (LSYLLLFILDLVICLIACLGL) traverse the membrane as a helical segment. The Cytoplasmic portion of the chain corresponds to 235–240 (AKRSKC). Residues 241–261 (LLASMLCCGALSLLLSWASLA) traverse the membrane as a helical segment. Over 262-388 (ADGSAAVATS…AGICYDGLQG (127 aa)) the chain is Extracellular. Cystine bridges form between Cys-274–Cys-382 and Cys-300–Cys-367. Asn-283 carries an N-linked (GlcNAc...) asparagine glycan. The N-linked (GlcNAc) asparagine glycan is linked to Asn-352. A helical transmembrane segment spans residues 389 to 409 (LLYLGLFSFLAALAFSTMICA). Over 410–534 (GPRAWKHFTT…LRHYGNQFPA (125 aa)) the chain is Cytoplasmic. Ser-504 is subject to Phosphoserine. A PY-motif; mediates interaction with NEDD4L motif is present at residues 506–509 (PPTY).

Belongs to the tweety family. In terms of assembly, homodimer. Forms cis-homodimers in the presence of Ca(+2) and forms monomers and trans-dimers in the absence of Ca(2+). Interacts with NEDD4L. N- Glycosylated. Contains high-mannose, hybrid and complex oligosaccharides. Post-translationally, ubiquitinated by NEDD4L, leading to its proteasomal degradation. Expressed at higher level in brain and testis and at lower levels in heart, ovary, spleen and peripheral blood leukocytes. Up-regulated in 13 of 16 renal cell carcinoma samples examined. Up-regulated in colon carcinoma.

Its subcellular location is the cell membrane. It carries out the reaction chloride(in) = chloride(out). The catalysed reaction is L-glutamate(out) = L-glutamate(in). Functionally, calcium-independent, swelling-dependent volume-regulated anion channel (VRAC-swell) which plays a pivotal role in the process of regulatory volume decrease (RVD) in the brain through the efflux of anions like chloride and organic osmolytes like glutamate. Probable large-conductance Ca(2+)-activated chloride channel. This is Protein tweety homolog 2 (TTYH2) from Homo sapiens (Human).